A 488-amino-acid polypeptide reads, in one-letter code: Rhamnulokinase (488 aa).

11–15 (ASSGR) contributes to the ATP binding site. Substrate-binding positions include alanine 79 and 234 to 236 (HDT). Aspartate 235 serves as the catalytic Proton acceptor. Residue threonine 257 participates in ATP binding. Asparagine 294 contacts substrate. ATP is bound by residues glutamine 302 and glycine 401.

Belongs to the rhamnulokinase family. Mg(2+) is required as a cofactor.

The catalysed reaction is L-rhamnulose + ATP = L-rhamnulose 1-phosphate + ADP + H(+). It participates in carbohydrate degradation; L-rhamnose degradation; glycerone phosphate from L-rhamnose: step 2/3. Its function is as follows. Involved in the catabolism of L-rhamnose (6-deoxy-L-mannose). Catalyzes the transfer of the gamma-phosphate group from ATP to the 1-hydroxyl group of L-rhamnulose to yield L-rhamnulose 1-phosphate. The sequence is that of Rhamnulokinase from Lactiplantibacillus plantarum (strain ATCC BAA-793 / NCIMB 8826 / WCFS1) (Lactobacillus plantarum).